The following is a 145-amino-acid chain: Basic phospholipase A2 P'513 (145 aa).

The first 21 residues, 1 to 21, serve as a signal peptide directing secretion; it reads MYPAHLLLLLAVCVSLLGASA. A propeptide spanning residues 22-27 is cleaved from the precursor; the sequence is IPPLPL. 7 cysteine pairs are disulfide-bonded: Cys-38–Cys-98, Cys-54–Cys-144, Cys-56–Cys-72, Cys-71–Cys-125, Cys-78–Cys-118, Cys-87–Cys-111, and Cys-105–Cys-116. Residues Tyr-55, Gly-57, and Gly-59 each contribute to the Ca(2+) site. His-75 is an active-site residue. Asp-76 is a Ca(2+) binding site. The active site involves Asp-119.

It belongs to the phospholipase A2 family. Group I subfamily. D49 sub-subfamily. Ca(2+) serves as cofactor. As to expression, expressed by the venom gland.

Its subcellular location is the secreted. The enzyme catalyses a 1,2-diacyl-sn-glycero-3-phosphocholine + H2O = a 1-acyl-sn-glycero-3-phosphocholine + a fatty acid + H(+). In terms of biological role, PLA2 catalyzes the calcium-dependent hydrolysis of the 2-acyl groups in 3-sn-phosphoglycerides. In Laticauda laticaudata (Blue-ringed sea krait), this protein is Basic phospholipase A2 P'513.